Reading from the N-terminus, the 785-residue chain is Peptide transporter family 2 (785 aa).

Helical transmembrane passes span 46–66 (FSFY…LNFS), 72–92 (VLFH…SILA), 99–119 (FWTI…LAFS), 134–154 (LLGL…VSAF), 167–187 (ISLF…ISMW), 208–228 (FGIP…GSFW), 303–323 (VIVM…QGST), 345–365 (MGVL…SIVY), and 382–402 (AGGG…QLFV). N-linked (GlcNAc...) asparagine glycosylation occurs at N467. The next 3 membrane-spanning stretches (helical) occupy residues 670–690 (ILWQ…FSIT), 711–731 (WLFT…LNIF), and 738–758 (MFVF…LAVF).

Belongs to the major facilitator superfamily. Proton-dependent oligopeptide transporter (POT/PTR) (TC 2.A.17) family. As to expression, expressed in vulval, pharyngeal and anal muscles.

The protein resides in the membrane. Proton-dependent uptake of di- or tripeptides, and to a minor extent tetrapeptides. Transport is independent of sodium and chloride ions. Protein shows high affinity to peptide substrates. In Caenorhabditis elegans, this protein is Peptide transporter family 2 (pept-2).